Consider the following 259-residue polypeptide: Kallikrein 1-related peptidase b22 (259 aa).

The N-terminal stretch at 1 to 17 is a signal peptide; sequence MRFLILFLTLSLGGIDA. A propeptide spans 18–24 (activation peptide); it reads APPVQSR. One can recognise a Peptidase S1 domain in the interval 25–256; the sequence is ILGGFKCEKN…FTSWIKDTMA (232 aa). 5 disulfides stabilise this stretch: Cys-31–Cys-171, Cys-50–Cys-66, Cys-150–Cys-217, Cys-182–Cys-196, and Cys-207–Cys-232. The Charge relay system role is filled by His-65. Residue Asn-102 is glycosylated (N-linked (GlcNAc...) asparagine). The active-site Charge relay system is the Asp-118. Ser-211 acts as the Charge relay system in catalysis.

This sequence belongs to the peptidase S1 family. Kallikrein subfamily.

The catalysed reaction is Preferential cleavage of Arg-|-Xaa bonds in small molecule substrates. Highly selective action to release kallidin (lysyl-bradykinin) from kininogen involves hydrolysis of Met-|-Xaa or Leu-|-Xaa.. Its function is as follows. Glandular kallikreins cleave Met-Lys and Arg-Ser bonds in kininogen to release Lys-bradykinin. The sequence is that of Kallikrein 1-related peptidase b22 (Klk1b22) from Mus musculus (Mouse).